A 253-amino-acid polypeptide reads, in one-letter code: Triosephosphate isomerase, cytosolic (253 aa).

Positions 10 and 12 each coordinate substrate. His96 serves as the catalytic Electrophile. Glu166 (proton acceptor) is an active-site residue.

Belongs to the triosephosphate isomerase family. Homodimer.

It is found in the cytoplasm. The enzyme catalyses D-glyceraldehyde 3-phosphate = dihydroxyacetone phosphate. It functions in the pathway carbohydrate biosynthesis; gluconeogenesis. The protein operates within carbohydrate degradation; glycolysis; D-glyceraldehyde 3-phosphate from glycerone phosphate: step 1/1. The polypeptide is Triosephosphate isomerase, cytosolic (Zea mays (Maize)).